A 518-amino-acid polypeptide reads, in one-letter code: Subtilisin-like protease 1 (518 aa).

The first 19 residues, 1–19, serve as a signal peptide directing secretion; it reads MGVFRFISISLAAVSAANA. A propeptide spanning residues 20 to 116 is cleaved from the precursor; it reads AQILSMPHAQ…VEPDTIISVH (97 aa). Residues 34-115 enclose the Inhibitor I9 domain; it reads SYIVMMKDDT…FVEPDTIISV (82 aa). In terms of domain architecture, Peptidase S8 spans 126–400; the sequence is SWGLARISNP…NVLINNGGAK (275 aa). Residues D158 and H190 each act as charge relay system in the active site. The segment at 175-198 is disordered; the sequence is GSNQVNDGDDRDGSGHGTHTSGTM. N233 and N251 each carry an N-linked (GlcNAc...) asparagine glycan. Residues 282–294 are compositionally biased toward polar residues; the sequence is NDNQDAQSSSPAS. A disordered region spans residues 282 to 312; the sequence is NDNQDAQSSSPASEPSVCTVGSSAEDDSRSS. Catalysis depends on S345, which acts as the Charge relay system. Polar residues predominate over residues 378–394; the sequence is TSSITDAGPGTPTNVLI. A disordered region spans residues 378-496; it reads TSSITDAGPG…PYPGGDNFDF (119 aa). 2 stretches are compositionally biased toward pro residues: residues 405-470 and 478-487; these read NPNP…PGEP and APAPQHPHTP.

The protein belongs to the peptidase S8 family.

The protein localises to the secreted. Its function is as follows. Secreted subtilisin-like serine protease with keratinolytic activity that contributes to pathogenicity. This is Subtilisin-like protease 1 (SUB1) from Trichophyton verrucosum (strain HKI 0517).